Here is a 164-residue protein sequence, read N- to C-terminus: MGEMGKAMGLLISGTLVYYHCAYRNATLLSLFSDVFIVLLCSLAILGLLFRQLNVSVPVDPLEWQISQDTASNIVARLANTVGAAEGVLRVAATGHDKRLFVKVVICLYFLSALGRLISGVTVAYAGLCLFCLSMLCQTSQSLGNCVLKRGNGQILEQEAHSDT.

The Reticulon domain occupies 1–164 (MGEMGKAMGL…ILEQEAHSDT (164 aa)). Helical transmembrane passes span 30 to 50 (SLFS…GLLF) and 117 to 137 (LISG…SMLC).

It is found in the endoplasmic reticulum membrane. The sequence is that of Reticulon-like protein B22 (RTNLB22) from Arabidopsis thaliana (Mouse-ear cress).